A 276-amino-acid chain; its full sequence is MLIDFSKMHGLGNDFMVVDGVTQKVFFSNDVIKKLADRHFGIGFDQLLLVEPPYDPELDFHYRIFNADGSEVEQCGNGARCFARFVRLKGLINRDRIAVSTARGRISLQLEGENQVTVNMGVPQFEPGKIPFRAQKAEKTYLLRAQEHTVMCGVVSMGNPHCVIEVPSVADAPVETLGAIMERHERFPERVNVGFMEMVNATEIRLRVFERGVGETLACGTGACAAAVIGISQGKLKERVTVSLPGGKLTIAWKGPGQPVYMTGPAEHVFDGQIEL.

Substrate is bound by residues Asn13, Gln46, and Asn66. Cys75 functions as the Proton donor in the catalytic mechanism. Substrate-binding positions include Gly76 to Asn77, Asn159, Asn192, and Glu210 to Arg211. Cys219 functions as the Proton acceptor in the catalytic mechanism. Residue Gly220–Thr221 coordinates substrate.

The protein belongs to the diaminopimelate epimerase family. In terms of assembly, homodimer.

It is found in the cytoplasm. The enzyme catalyses (2S,6S)-2,6-diaminopimelate = meso-2,6-diaminopimelate. Its pathway is amino-acid biosynthesis; L-lysine biosynthesis via DAP pathway; DL-2,6-diaminopimelate from LL-2,6-diaminopimelate: step 1/1. In terms of biological role, catalyzes the stereoinversion of LL-2,6-diaminopimelate (L,L-DAP) to meso-diaminopimelate (meso-DAP), a precursor of L-lysine and an essential component of the bacterial peptidoglycan. The sequence is that of Diaminopimelate epimerase from Aeromonas salmonicida (strain A449).